A 267-amino-acid chain; its full sequence is Lectin SfL-1 (267 aa).

4 consecutive repeat copies span residues 1–67 (GRYT…RRGD), 68–135 (SNNY…QSGG), 136–202 (DSYN…STGG), and 203–267 (SNYK…GTAI). The segment at 1 to 267 (GRYTVQNQWG…GPIGFKGTAI (267 aa)) is 4 X approximate tandem repeats.

In terms of assembly, monomer.

In terms of biological role, lectin specific for high mannose N-glycans, recognizes the branched moiety of these glycans. Does not recognize other types of N-glycans or monosaccharides. The protein is Lectin SfL-1 of Solieria filiformis (Red alga).